The chain runs to 308 residues: ATP synthase gamma chain (308 aa).

The protein belongs to the ATPase gamma chain family. F-type ATPases have 2 components, CF(1) - the catalytic core - and CF(0) - the membrane proton channel. CF(1) has five subunits: alpha(3), beta(3), gamma(1), delta(1), epsilon(1). CF(0) has three main subunits: a, b and c.

The protein localises to the cell membrane. In terms of biological role, produces ATP from ADP in the presence of a proton gradient across the membrane. The gamma chain is believed to be important in regulating ATPase activity and the flow of protons through the CF(0) complex. This chain is ATP synthase gamma chain, found in Lacticaseibacillus paracasei (strain ATCC 334 / BCRC 17002 / CCUG 31169 / CIP 107868 / KCTC 3260 / NRRL B-441) (Lactobacillus paracasei).